The sequence spans 818 residues: uncharacterized protein (818 aa).

Low complexity-rich tracts occupy residues Met1 to Ser33, Asn44 to Gln68, and Asn97 to Asn150. 5 disordered regions span residues Met1–Gln68, Leu92–Asn150, Lys164–Glu220, Asn284–Asp306, and Asn415–Asn445. Acidic residues-rich tracts occupy residues Ser172–Glu190 and Asp205–Glu214. The segment covering Asn284 to Arg302 has biased composition (low complexity). Residues Ile534–Val554 form a helical membrane-spanning segment. A disordered region spans residues Ala779 to Leu808. The span at Ser784 to Ser803 shows a compositional bias: low complexity.

It localises to the membrane. This is an uncharacterized protein from Dictyostelium discoideum (Social amoeba).